The primary structure comprises 407 residues: Gonadotropin-releasing hormone receptor (407 aa).

The Extracellular segment spans residues 1–36; that stretch reads MDYLNDSMFNNMTYNITSTPLPDAPRFDNVYVSKLC. 3 N-linked (GlcNAc...) asparagine glycosylation sites follow: Asn5, Asn11, and Asn15. Residues 37–57 traverse the membrane as a helical segment; sequence VLGTVFVISFFGNTLVIIQIF. The Cytoplasmic portion of the chain corresponds to 58 to 69; sequence RIRGSRSTIQSL. Residues 70-90 traverse the membrane as a helical segment; sequence ILNLAIADLMVSFFNILMDII. Residues 91–105 lie on the Extracellular side of the membrane; sequence WSATVEWLAGNTMCK. Cys104 and Cys183 are joined by a disulfide. A helical membrane pass occupies residues 106–126; the sequence is IMKYLTVFGLHLSTYITVSIA. The Cytoplasmic segment spans residues 127–147; the sequence is LDRCFAILSPMSRSKAPLRVR. A helical transmembrane segment spans residues 148–168; the sequence is IMITMAWVLSAIFSIPQAVIF. The Extracellular segment spans residues 169 to 199; it reads QEQRKMFRQGMFHQCRDSYNALWQKQLYSAS. A helical transmembrane segment spans residues 200-220; the sequence is SLILLFVIPLIIMVTSYLLIL. The Cytoplasmic portion of the chain corresponds to 221–268; the sequence is KTIVKTSRQFHDTPISPTSMSCYSVNHGQIRTHLFERARKRSSRMSAV. A helical transmembrane segment spans residues 269–289; that stretch reads IVAAFILCWTPYYIIFLGFAF. Topologically, residues 290-298 are extracellular; sequence FQWDNSRTV. A helical transmembrane segment spans residues 299–319; that stretch reads IYFFTLGTSNCMLNPLIYGAF. Over 320-407 the chain is Cytoplasmic; sequence TIYKVHRGRS…NGKMPTKPPG (88 aa). A disordered region spans residues 377–407; that stretch reads SLTNPHQPVRPSPGINSTTSPNGKMPTKPPG.

It belongs to the G-protein coupled receptor 1 family. Widely expressed in peripheral nervous tissue, gonadal tissue and brain. In the brain, expression is high in the palliovisceral lobe and superior buccal lobe but low in the subvertical lobe, superior and inferior frontal lobe, posterior brachial lobe and pedal lobe. Expressed in stomach, rectum, aorta, heart, salivary gland, branchia, pancreas, radula retractor muscle, branchial vessel but not in white body, esophagus, liver and kidney.

It is found in the cell membrane. Its function is as follows. Receptor for gonadotropin releasing hormone (GnRH) that mediates the action of GnRH to stimulate the secretion of the gonadotropic hormones luteinizing hormone (LH) and follicle-stimulating hormone (FSH). This receptor mediates its action by association with G-proteins that activate a phosphatidylinositol-calcium second messenger system. Ligand interaction triggers steroidogenesis in spermatozoa and follicles. Appears to be involved in contraction of the radula retractor muscle. The chain is Gonadotropin-releasing hormone receptor from Octopus vulgaris (Common octopus).